A 364-amino-acid chain; its full sequence is Ribosomal RNA large subunit methyltransferase M (364 aa).

S-adenosyl-L-methionine contacts are provided by residues Ser198, 231–234, Asp250, Asp270, and Asp286; that span reads APGG. Lys315 (proton acceptor) is an active-site residue.

The protein belongs to the class I-like SAM-binding methyltransferase superfamily. RNA methyltransferase RlmE family. RlmM subfamily. As to quaternary structure, monomer.

It localises to the cytoplasm. The enzyme catalyses cytidine(2498) in 23S rRNA + S-adenosyl-L-methionine = 2'-O-methylcytidine(2498) in 23S rRNA + S-adenosyl-L-homocysteine + H(+). Functionally, catalyzes the 2'-O-methylation at nucleotide C2498 in 23S rRNA. The sequence is that of Ribosomal RNA large subunit methyltransferase M from Azoarcus sp. (strain BH72).